The primary structure comprises 460 residues: Lipase member H (460 aa).

A signal peptide spans 1–24 (MLLRFYFNGLLFVGCLLSWGRSDT). Asn67 and Asn75 each carry an N-linked (GlcNAc...) asparagine glycan. The Nucleophile role is filled by Ser163. Asn177 carries N-linked (GlcNAc...) asparagine glycosylation. The active-site Charge relay system is Asp187. Cys242 and Cys255 form a disulfide bridge. His257 acts as the Charge relay system in catalysis. Disulfide bonds link Cys279-Cys290 and Cys293-Cys301. Asn289 carries N-linked (GlcNAc...) asparagine glycosylation. Asn366 carries N-linked (GlcNAc...) asparagine glycosylation. An intrachain disulfide couples Cys436 to Cys455.

Belongs to the AB hydrolase superfamily. Lipase family.

The protein resides in the secreted. The protein localises to the cell membrane. It catalyses the reaction 1-hexadecanoyl-2-(9Z-octadecenoyl)-sn-glycero-3-phosphate + H2O = 2-(9Z-octadecenoyl)-sn-glycero-3-phosphate + hexadecanoate + H(+). In terms of biological role, hydrolyzes specifically phosphatidic acid (PA) to produce 2-acyl lysophosphatidic acid (LPA; a potent bioactive lipid mediator) and fatty acid. Does not hydrolyze other phospholipids, like phosphatidylserine (PS), phosphatidylcholine (PC) and phosphatidylethanolamine (PE) or triacylglycerol (TG). The protein is Lipase member H (liph) of Xenopus tropicalis (Western clawed frog).